The following is a 316-amino-acid chain: MSVREKMLEILEGIDIRFQEPXHSYSYTKVGGEADYLVFPRNRFELARVVKFANQENIPWMVLGNASNIIVRDGGIRGFVILCDKLNNVSVDGYTIEAEAGANLIETTRIALRHSLTGFEFACGIPGSVGGAVFMNAGAYGGEIAHILQSCKVLTKDGEIETLSAKDLAFGYRHSAIQESGAVVLSVKFALAPGTHQVIKQEMDRLTHLRELKQPLEYPSCGSXFKRPVGHFAXQLISEXGLKGYRIGGVEVSEKHAGFMINVADGTAKDYEDLIQSVIEKVKEHSGITLEREVRILGESLSVAKMYAGGFTPCKR.

The FAD-binding PCMH-type domain occupies 30–194 (VGGEADYLVF…LSVKFALAPG (165 aa)). Residue arginine 173 is part of the active site. The active-site Proton donor is serine 223. Glutamate 293 is a catalytic residue.

The protein belongs to the MurB family. Requires FAD as cofactor.

The protein resides in the cytoplasm. It carries out the reaction UDP-N-acetyl-alpha-D-muramate + NADP(+) = UDP-N-acetyl-3-O-(1-carboxyvinyl)-alpha-D-glucosamine + NADPH + H(+). The protein operates within cell wall biogenesis; peptidoglycan biosynthesis. Functionally, cell wall formation. This is UDP-N-acetylenolpyruvoylglucosamine reductase from Streptococcus pneumoniae serotype 19F (strain G54).